The sequence spans 76 residues: Alpha/kappa-conotoxin-like fe14.1 (76 aa).

A signal peptide spans 1 to 24 (MPSVRSVTCCCLLWMMLSVQLVTP). Positions 25 to 39 (GSPGTAQLSGHRTAR) are excised as a propeptide. 2 disulfides stabilise this stretch: Cys46–Cys61 and Cys50–Cys63. Arg64 bears the Arginine amide mark. Positions 65-76 (GKRDVVSSSMAV) are excised as a propeptide.

This sequence belongs to the conotoxin J superfamily. As to expression, expressed by the venom duct.

Its subcellular location is the secreted. Functionally, highly inhibits both nicotinic acetylcholine receptors (neuronal (alpha-3/beta-4) and muscular (alpha-1/beta-1/epsilon/delta) subtypes) and the voltage-gated potassium channel Kv1.6/KCNA6 subtype. The polypeptide is Alpha/kappa-conotoxin-like fe14.1 (Conus ferrugineus (Cone snail)).